A 270-amino-acid chain; its full sequence is tRNA (guanine-N(1)-)-methyltransferase (270 aa).

Residues G119 and 139–144 contribute to the S-adenosyl-L-methionine site; that span reads IGDYVI.

This sequence belongs to the RNA methyltransferase TrmD family. Homodimer.

Its subcellular location is the cytoplasm. The catalysed reaction is guanosine(37) in tRNA + S-adenosyl-L-methionine = N(1)-methylguanosine(37) in tRNA + S-adenosyl-L-homocysteine + H(+). In terms of biological role, specifically methylates guanosine-37 in various tRNAs. The chain is tRNA (guanine-N(1)-)-methyltransferase from Nitrosomonas europaea (strain ATCC 19718 / CIP 103999 / KCTC 2705 / NBRC 14298).